We begin with the raw amino-acid sequence, 370 residues long: ABSCISIC ACID-INSENSITIVE 5-like protein 8 (370 aa).

Ser25, Ser44, and Ser69 each carry phosphoserine. The segment at 56–77 (SAEETQEGSQRQGSTTLPPTLS) is disordered. Residues 62–77 (EGSQRQGSTTLPPTLS) are compositionally biased toward polar residues. Thr111 carries the phosphothreonine modification. Polar residues predominate over residues 260-278 (ESSLLSPSPYISNGSTSTR). Positions 260–281 (ESSLLSPSPYISNGSTSTRGGK) are disordered. The bZIP domain occupies 293–356 (VDKKLRRKIK…MEPGMISLHE (64 aa)). The tract at residues 295–314 (KKLRRKIKNRESAARSRARK) is basic motif. The tract at residues 328 to 342 (LKKDYEELLKQHVEL) is leucine-zipper. The tract at residues 349 to 370 (PGMISLHERPERKLRRTKSDIK) is disordered. The segment covering 354–370 (LHERPERKLRRTKSDIK) has biased composition (basic and acidic residues).

This sequence belongs to the bZIP family. ABI5 subfamily. As to quaternary structure, DNA-binding heterodimer.

The protein resides in the nucleus. Functionally, could participate in abscisic acid-regulated gene expression. This Arabidopsis thaliana (Mouse-ear cress) protein is ABSCISIC ACID-INSENSITIVE 5-like protein 8 (BZIP15).